The chain runs to 118 residues: MISTSNYDVTKDPKFLAFCSLATEGYGQNNTQQSSIGFNEFCEKLEKNAIVKPENKKSTLDLNKSLEDWKLRFTAGGNLSTMDSQVLDVIKKAYNLGMVNKDNMLLRNEAINAYRNSI.

The polypeptide is SPbeta prophage-derived uncharacterized protein YolB (yolB) (Bacillus subtilis (strain 168)).